A 483-amino-acid chain; its full sequence is (R)-mandelonitrile beta-glucosyltransferase (483 aa).

The Proton acceptor role is filled by His22. His22 serves as a coordination point for an anthocyanidin. Asp124 acts as the Charge relay in catalysis. UDP-alpha-D-glucose-binding residues include Thr146, Gln363, His378, Trp381, Asn382, Ser383, and Glu386. Ala401 provides a ligand contact to an anthocyanidin. Glu402 and Gln403 together coordinate UDP-alpha-D-glucose.

The protein belongs to the UDP-glycosyltransferase family.

It catalyses the reaction (R)-mandelonitrile + UDP-alpha-D-glucose = (R)-prunasin + UDP + H(+). Involved in the biosynthesis of the cyanogenic glycoside (R)-prunasin, a precursor of (R)-amygdalin, which at high concentrations is associated with intense bitterness in kernels of almond. Stereo-selectively glucosylates (R)-mandelonitrile to produce (R)-prunasin. The chain is (R)-mandelonitrile beta-glucosyltransferase from Prunus dulcis (Almond).